A 377-amino-acid polypeptide reads, in one-letter code: Ribosomal RNA large subunit methyltransferase G (377 aa).

It belongs to the methyltransferase superfamily. RlmG family.

The protein resides in the cytoplasm. It catalyses the reaction guanosine(1835) in 23S rRNA + S-adenosyl-L-methionine = N(2)-methylguanosine(1835) in 23S rRNA + S-adenosyl-L-homocysteine + H(+). Its function is as follows. Specifically methylates the guanine in position 1835 (m2G1835) of 23S rRNA. The sequence is that of Ribosomal RNA large subunit methyltransferase G from Streptomyces coelicolor (strain ATCC BAA-471 / A3(2) / M145).